Consider the following 594-residue polypeptide: uncharacterized protein (594 aa).

Functionally, the presence of the two linear plasmids, termed pGKL1 and pGKL2, in strains of Kluyveromyces lactis confers the killer phenotype to the host cell, by promoting the secretion of a toxin able to inhibit the growth of sensitive strains. This is an uncharacterized protein from Kluyveromyces lactis (strain ATCC 8585 / CBS 2359 / DSM 70799 / NBRC 1267 / NRRL Y-1140 / WM37) (Yeast).